Here is a 145-residue protein sequence, read N- to C-terminus: Photosystem I reaction center subunit XI (145 aa).

Transmembrane regions (helical) follow at residues leucine 48–leucine 68, leucine 75–isoleucine 95, and isoleucine 125–alanine 145.

It belongs to the PsaL family.

The protein resides in the plastid. Its subcellular location is the chloroplast thylakoid membrane. This is Photosystem I reaction center subunit XI from Isochrysis galbana (Marine planktonic alga).